The sequence spans 1047 residues: Atrial natriuretic peptide receptor 2 (1047 aa).

The N-terminal stretch at 1–16 (MALPSLLLVVAALAGG) is a signal peptide. The Extracellular segment spans residues 17 to 458 (VRPPGARNLT…DKTPLSTLAI (442 aa)). N-linked (GlcNAc...) asparagine glycans are attached at residues Asn-24 and Asn-35. A disulfide bridge links Cys-75 with Cys-101. Residues Asn-161, Asn-195, Asn-244, Asn-277, and Asn-349 are each glycosylated (N-linked (GlcNAc...) asparagine). A helical transmembrane segment spans residues 459 to 478 (VALGTGITFIMFGVSSFLIF). Topologically, residues 479-1047 (RKLMLEKELA…GERKGPAGLL (569 aa)) are cytoplasmic. Ser-513 bears the Phosphoserine mark. The Protein kinase domain maps to 513–786 (SRLTLSLRGS…PDFGQIKGFI (274 aa)). Phosphothreonine is present on Thr-516. Residues Ser-518, Ser-522, Ser-523, and Ser-526 each carry the phosphoserine modification. At Thr-529 the chain carries Phosphothreonine. One can recognise a Guanylate cyclase domain in the interval 861–991 (TIYFSDIVGF…DTVNTASRME (131 aa)).

The protein belongs to the adenylyl cyclase class-4/guanylyl cyclase family. In terms of processing, phosphorylated. Phosphorylation of the protein kinase-like domain is required for full activation by CNP. Glycosylated.

The protein localises to the cell membrane. It carries out the reaction GTP = 3',5'-cyclic GMP + diphosphate. Receptor for the C-type natriuretic peptide NPPC/CNP hormone. Has guanylate cyclase activity upon binding of its ligand. May play a role in the regulation of skeletal growth. The protein is Atrial natriuretic peptide receptor 2 (NPR2) of Bos taurus (Bovine).